Reading from the N-terminus, the 298-residue chain is MFKSGFVAILGRPNVGKSTFLNHVMGQKIAIMSDKAQTTRNKIMGIYTTETEQIVFIDTPGIHKPKTALGDFMVESAYSTLREVETVLFMVPADEKRGKGDDMIIERLKAAKIPVILVINKIDKVHPDQLLAQIDDFRSQMEFKEVVPISALEGNNVPTLIKLLTDNLEEGFQYFPEDQITDHPERFLVSEMIREKVLHLTQQEVPHSVAVVVESMKRDEETDKVHIRATIMVERDSQKGIIIGKQGAMLKKIGKMARRDIELMLGDKVYLETWVKVKKNWRDKKLDLADFGYNEKEY.

Positions 3–170 constitute an Era-type G domain; sequence KSGFVAILGR…IKLLTDNLEE (168 aa). The G1 stretch occupies residues 11–18; the sequence is GRPNVGKS. 11 to 18 is a binding site for GTP; it reads GRPNVGKS. Residues 37–41 are G2; that stretch reads QTTRN. The segment at 58–61 is G3; it reads DTPG. GTP is bound by residues 58 to 62 and 120 to 123; these read DTPGI and NKID. The segment at 120–123 is G4; it reads NKID. The tract at residues 149 to 151 is G5; the sequence is ISA. Positions 201 to 279 constitute a KH type-2 domain; the sequence is TQQEVPHSVA…YLETWVKVKK (79 aa).

It belongs to the TRAFAC class TrmE-Era-EngA-EngB-Septin-like GTPase superfamily. Era GTPase family. In terms of assembly, monomer.

It is found in the cytoplasm. The protein localises to the cell membrane. Its function is as follows. An essential GTPase that binds both GDP and GTP, with rapid nucleotide exchange. Plays a role in 16S rRNA processing and 30S ribosomal subunit biogenesis and possibly also in cell cycle regulation and energy metabolism. This is GTPase Era from Streptococcus pyogenes serotype M4 (strain MGAS10750).